A 1164-amino-acid chain; its full sequence is FH1/FH2 domain-containing protein 1 (1164 aa).

A GBD/FH3 domain is found at 53–458 (AQIPAVHRLL…AAETEKQVAL (406 aa)). Disordered stretches follow at residues 340 to 411 (DIEE…VGPP) and 470 to 500 (MPNEAGGHPDARQLWDSPETAPAARTPQSPA). Residues 355–368 (KPSSEEGKRSRRSL) are compositionally biased toward basic and acidic residues. Serine 367 carries the post-translational modification Phosphoserine. Residues 402–411 (GPASSPVGPP) are compositionally biased toward low complexity. Phosphoserine is present on serine 486. In terms of domain architecture, FH1 spans 487 to 615 (PETAPAARTP…LAAPLPHSVP (129 aa)). At threonine 495 the chain carries Phosphothreonine. Phosphoserine occurs at positions 498, 523, and 573. The segment at 566–619 (GKDIPAPSPPLPLLSGVPPPPPLPPPPPIKGPFPPPPPLPLAAPLPHSVPDSSA) is disordered. A compositionally biased stretch (pro residues) spans 571-608 (APSPPLPLLSGVPPPPPLPPPPPIKGPFPPPPPLPLAA). Residues 612 to 807 (HSVPDSSALP…AEPLFDLKVG (196 aa)) form an interaction with ROCK1 region. Positions 616 to 1013 (DSSALPTKRK…YRERNKTRGR (398 aa)) constitute an FH2 domain. Threonine 690 carries the phosphothreonine modification. Residues 884–921 (LTRCAKVDFEQLTENLGQLERRSRAAEESLRSLAKHEL) are a coiled coil. Positions 1020–1143 (KFSGVAGEAP…NRKSLRRTLK (124 aa)) are disordered. Low complexity predominate over residues 1028 to 1041 (APSNPSVPVAVSSG). Residues 1053–1133 (MKSLLTSRPE…AARERKRSRG (81 aa)) enclose the DAD domain. Polar residues predominate over residues 1073–1089 (MVQSSSPIMPTVGPSTA). Positions 1127–1142 (ERKRSRGNRKSLRRTL) are enriched in basic residues.

The protein belongs to the formin homology family. In terms of assembly, self-associates via the FH2 domain. Binds to F-actin via its N-terminus. Binds to the cytoplasmic domain of CD21 via its C-terminus. Interacts with ROCK1 in a Src-dependent manner. In terms of processing, phosphorylated by ROCK1. Ubiquitous. Highly expressed in spleen.

The protein localises to the cytoplasm. Its subcellular location is the cytoskeleton. The protein resides in the cell projection. It is found in the bleb. Required for the assembly of F-actin structures, such as stress fibers. Depends on the Rho-ROCK cascade for its activity. Contributes to the coordination of microtubules with actin fibers and plays a role in cell elongation. Acts synergistically with ROCK1 to promote SRC-dependent non-apoptotic plasma membrane blebbing. This Homo sapiens (Human) protein is FH1/FH2 domain-containing protein 1 (FHOD1).